A 198-amino-acid chain; its full sequence is dTTP/UTP pyrophosphatase (198 aa).

Residue Asp78 is the Proton acceptor of the active site.

The protein belongs to the Maf family. YhdE subfamily. A divalent metal cation serves as cofactor.

The protein resides in the cytoplasm. It catalyses the reaction dTTP + H2O = dTMP + diphosphate + H(+). It carries out the reaction UTP + H2O = UMP + diphosphate + H(+). Its function is as follows. Nucleoside triphosphate pyrophosphatase that hydrolyzes dTTP and UTP. May have a dual role in cell division arrest and in preventing the incorporation of modified nucleotides into cellular nucleic acids. The chain is dTTP/UTP pyrophosphatase from Chromobacterium violaceum (strain ATCC 12472 / DSM 30191 / JCM 1249 / CCUG 213 / NBRC 12614 / NCIMB 9131 / NCTC 9757 / MK).